The sequence spans 89 residues: Small ribosomal subunit protein uS14 (89 aa).

The protein belongs to the universal ribosomal protein uS14 family. As to quaternary structure, part of the 30S ribosomal subunit. Contacts proteins S3 and S10.

Binds 16S rRNA, required for the assembly of 30S particles and may also be responsible for determining the conformation of the 16S rRNA at the A site. The protein is Small ribosomal subunit protein uS14 of Exiguobacterium sibiricum (strain DSM 17290 / CCUG 55495 / CIP 109462 / JCM 13490 / 255-15).